The following is a 1959-amino-acid chain: Zinc finger protein hangover (1959 aa).

The region spanning 79–155 (NCCRLCIAPQ…FSSQAKQRQW (77 aa)) is the ZAD domain. Cys81, Cys84, Cys128, and Cys131 together coordinate Zn(2+). Residues 178-208 (GFFDQHLHQQQQHHQHLENELEAEKEKATPT) are disordered. Over residues 192–205 (QHLENELEAEKEKA) the composition is skewed to basic and acidic residues. Ser228 carries the phosphoserine modification. A Phosphothreonine modification is found at Thr246. A C2H2-type 1 zinc finger spans residues 318 to 341 (ASCRACSLQFSTRANARRHERNLH). The C2H2-type 2; degenerate zinc finger occupies 447 to 469 (MTCRCCNKYFSTYKNFMAHVRKK). The C2H2-type 3 zinc-finger motif lies at 581 to 604 (YECKLCPKGFRTKHEFRTHVYDKH). Residues 674–762 (AVSDNASTTG…ANRDASAPKS (89 aa)) form a disordered region. The segment covering 677–693 (DNASTTGSGMARSNSME) has biased composition (polar residues). Ser680 carries the post-translational modification Phosphoserine. Composition is skewed to low complexity over residues 716–727 (SSSAAPPLTSTP) and 741–759 (TSAS…DASA). 2 consecutive C2H2-type zinc fingers follow at residues 770-793 (QVCP…ESKH) and 801-824 (YKCV…INVH). A phosphoserine mark is found at Ser832, Ser894, Ser895, Ser898, and Ser899. The C2H2-type 6 zinc finger occupies 908–930 (KECPICNAVFSNNIGLSNHMRSH). Residues 960–991 (TDSELGVGGTMSESAPATPANVPPAMANQTPQ) are disordered. 5 C2H2-type zinc fingers span residues 1011–1034 (MRCR…LTDH), 1042–1065 (IKCK…FKVH), 1078–1101 (FECD…RSVH), 1154–1176 (YQCK…INSH), and 1184–1207 (YSCK…YKKH). Polar residues predominate over residues 1233-1253 (TPTCNRKPITSTGAHQQQDGQ). The disordered stretch occupies residues 1233-1301 (TPTCNRKPIT…GNGTTVGVAS (69 aa)). Positions 1255-1267 (HSHHTAKRTIFRH) are enriched in basic residues. Residues 1271-1283 (DDDDEEDDDEQQQ) are compositionally biased toward acidic residues. C2H2-type zinc fingers lie at residues 1318–1340 (VACT…IQKH) and 1375–1397 (YACD…RKWH). Residues 1445–1467 (QQSLNNSCNSSMNHNNNSSSNRS) are compositionally biased toward low complexity. The segment at 1445 to 1471 (QQSLNNSCNSSMNHNNNSSSNRSKSMK) is disordered. C2H2-type zinc fingers lie at residues 1476-1499 (LKCE…YELH) and 1552-1574 (WGCD…INNH). The segment at 1627 to 1865 (AAGATTTDKL…STGERRKKAV (239 aa)) is disordered. Positions 1639–1695 (PDEEDSDDLDEDSSGDDDDSSGTGDDDDDDDSDDDEDGEGEDEDEEGDGGEGEDEEG) are enriched in acidic residues. Low complexity predominate over residues 1697-1715 (QPPAQLLPQQQHKTDLNLN). Acidic residues-rich tracts occupy residues 1716–1758 (QDDD…EEPE) and 1782–1829 (SDDE…EDEP). The span at 1833–1851 (STASFSESESSTTTTSNSH) shows a compositional bias: low complexity. Residues 1873 to 1895 (FTCDLCQLCFDSQELLQSHIKSH) form a C2H2-type 16 zinc finger. A disordered region spans residues 1933–1959 (PDSKSAVLANNNNSKTSSKTVAAGATN). Positions 1942–1952 (NNNNSKTSSKT) are enriched in low complexity.

Expressed ubiquitously in the nervous system, in neurons not glia.

The protein resides in the nucleus. In terms of biological role, required for normal development of ethanol tolerance. Relies on two distinct molecular pathways: a cellular stress pathway defined by hang, and a parallel pathway requiring octopamine. This chain is Zinc finger protein hangover (hang), found in Drosophila melanogaster (Fruit fly).